We begin with the raw amino-acid sequence, 316 residues long: MDKENFTRLRGELFCDHPLARYTSWRVGGKAERFYRPADLFDLQDFLTQLPSDEPLTWLGLGSNVLIRDGGIKGTVILTLNRLKELSVVNSQLVFREKSGTEDFFSGNGKTIIRAEAGVTCAKLAKFCVSQGLEDGAFFAGIPGTVGGALAMNAGAFGGETWRTVIGVETMNHQGEILKRTPDEFKIHYRQVEGLENQFFIAGYFCFNHGDPDKAKTAINALLKKRNLSQPIGKYSCGSVFRNPPGDYAARLIESAGLKGKSIGNAEVSEKHANFILNKGNASAADIEALIHYVAQHVSQNHGIQLVKEVHIIGRS.

The 199-residue stretch at Val27 to Lys225 folds into the FAD-binding PCMH-type domain. Arg190 is an active-site residue. Ser239 serves as the catalytic Proton donor. Glu309 is an active-site residue.

The protein belongs to the MurB family. The cofactor is FAD.

The protein localises to the cytoplasm. The enzyme catalyses UDP-N-acetyl-alpha-D-muramate + NADP(+) = UDP-N-acetyl-3-O-(1-carboxyvinyl)-alpha-D-glucosamine + NADPH + H(+). It functions in the pathway cell wall biogenesis; peptidoglycan biosynthesis. In terms of biological role, cell wall formation. The protein is UDP-N-acetylenolpyruvoylglucosamine reductase of Coxiella burnetii (strain Dugway 5J108-111).